We begin with the raw amino-acid sequence, 425 residues long: Ribonuclease T2-like (425 aa).

Positions 1-18 (MLLNKGLLASLLAYTTTA) are cleaved as a signal peptide. Cystine bridges form between Cys32/Cys51, Cys40/Cys99, Cys50/Cys175, Cys107/Cys167, and Cys245/Cys281. N-linked (GlcNAc...) asparagine glycosylation is present at Asn42. Residue His92 is part of the active site. The N-linked (GlcNAc...) asparagine glycan is linked to Asn134. Active-site residues include Glu160 and His164.

Belongs to the RNase T2 family.

Its subcellular location is the vacuole lumen. It is found in the cytoplasm. It carries out the reaction a ribonucleotidyl-ribonucleotide-RNA + H2O = a 3'-end 3'-phospho-ribonucleotide-RNA + a 5'-end dephospho-ribonucleoside-RNA + H(+). Its function is as follows. Rnase which modulates cell survival under stress conditions. Released from the vacuole to the cytoplasm during stress to promote tRNA and rRNA cleavage and to activate separately a downstream pathway that promotes cell death. Involved in cell size, vacuolar morphology and growth at high temperatures and high salt concentration. The chain is Ribonuclease T2-like (RNY1) from Kluyveromyces lactis (strain ATCC 8585 / CBS 2359 / DSM 70799 / NBRC 1267 / NRRL Y-1140 / WM37) (Yeast).